Consider the following 400-residue polypeptide: Probable peptidoglycan D,D-transpeptidase PenA (400 aa).

Residues 1 to 21 (NIDGKGQEGLELSREDSLRGE) are disordered. Ser-128 serves as the catalytic Acyl-ester intermediate.

The protein belongs to the transpeptidase family. FtsI subfamily.

Its subcellular location is the cell inner membrane. It carries out the reaction Preferential cleavage: (Ac)2-L-Lys-D-Ala-|-D-Ala. Also transpeptidation of peptidyl-alanyl moieties that are N-acyl substituents of D-alanine.. The protein operates within cell wall biogenesis; peptidoglycan biosynthesis. Catalyzes cross-linking of the peptidoglycan cell wall at the division septum. This Neisseria flavescens protein is Probable peptidoglycan D,D-transpeptidase PenA.